The sequence spans 134 residues: Ribosome-binding factor A (134 aa).

The protein belongs to the RbfA family. In terms of assembly, monomer. Binds 30S ribosomal subunits, but not 50S ribosomal subunits or 70S ribosomes.

It is found in the cytoplasm. Functionally, one of several proteins that assist in the late maturation steps of the functional core of the 30S ribosomal subunit. Associates with free 30S ribosomal subunits (but not with 30S subunits that are part of 70S ribosomes or polysomes). Required for efficient processing of 16S rRNA. May interact with the 5'-terminal helix region of 16S rRNA. This chain is Ribosome-binding factor A, found in Bartonella bacilliformis (strain ATCC 35685 / KC583 / Herrer 020/F12,63).